A 123-amino-acid chain; its full sequence is Small ribosomal subunit protein uS12 (123 aa).

The tract at residues 1–28 (MPTIQQLIRKPREPKRVRSKSQHLESCP) is disordered. Aspartate 89 carries the post-translational modification 3-methylthioaspartic acid.

It belongs to the universal ribosomal protein uS12 family. In terms of assembly, part of the 30S ribosomal subunit. Contacts proteins S8 and S17. May interact with IF1 in the 30S initiation complex.

Its function is as follows. With S4 and S5 plays an important role in translational accuracy. Functionally, interacts with and stabilizes bases of the 16S rRNA that are involved in tRNA selection in the A site and with the mRNA backbone. Located at the interface of the 30S and 50S subunits, it traverses the body of the 30S subunit contacting proteins on the other side and probably holding the rRNA structure together. The combined cluster of proteins S8, S12 and S17 appears to hold together the shoulder and platform of the 30S subunit. In Cereibacter sphaeroides (strain ATCC 17029 / ATH 2.4.9) (Rhodobacter sphaeroides), this protein is Small ribosomal subunit protein uS12.